Consider the following 126-residue polypeptide: Probable glycine cleavage system H protein (126 aa).

In terms of domain architecture, Lipoyl-binding spans Val24 to Glu106. Lys65 carries the post-translational modification N6-lipoyllysine.

The protein belongs to the GcvH family. In terms of assembly, the glycine cleavage system is composed of four proteins: P, T, L and H. It depends on (R)-lipoate as a cofactor.

Functionally, the glycine cleavage system catalyzes the degradation of glycine. The H protein shuttles the methylamine group of glycine from the P protein to the T protein. This chain is Probable glycine cleavage system H protein, found in Natronomonas pharaonis (strain ATCC 35678 / DSM 2160 / CIP 103997 / JCM 8858 / NBRC 14720 / NCIMB 2260 / Gabara) (Halobacterium pharaonis).